The primary structure comprises 425 residues: Serine--tRNA ligase (425 aa).

Residue 231–233 participates in L-serine binding; it reads TAE. Residue 262–264 participates in ATP binding; it reads RSE. Glu285 contributes to the L-serine binding site. An ATP-binding site is contributed by 349 to 352; that stretch reads EISS. Residue Ser385 coordinates L-serine.

The protein belongs to the class-II aminoacyl-tRNA synthetase family. Type-1 seryl-tRNA synthetase subfamily. As to quaternary structure, homodimer. The tRNA molecule binds across the dimer.

Its subcellular location is the cytoplasm. The enzyme catalyses tRNA(Ser) + L-serine + ATP = L-seryl-tRNA(Ser) + AMP + diphosphate + H(+). The catalysed reaction is tRNA(Sec) + L-serine + ATP = L-seryl-tRNA(Sec) + AMP + diphosphate + H(+). The protein operates within aminoacyl-tRNA biosynthesis; selenocysteinyl-tRNA(Sec) biosynthesis; L-seryl-tRNA(Sec) from L-serine and tRNA(Sec): step 1/1. In terms of biological role, catalyzes the attachment of serine to tRNA(Ser). Is also able to aminoacylate tRNA(Sec) with serine, to form the misacylated tRNA L-seryl-tRNA(Sec), which will be further converted into selenocysteinyl-tRNA(Sec). The sequence is that of Serine--tRNA ligase from Desulfosudis oleivorans (strain DSM 6200 / JCM 39069 / Hxd3) (Desulfococcus oleovorans).